The following is a 260-amino-acid chain: Snake venom serine protease salmobin (260 aa).

Positions methionine 1 to alanine 18 are cleaved as a signal peptide. The propeptide occupies glutamine 19 to leucine 24. The 227-residue stretch at valine 25–alanine 251 folds into the Peptidase S1 domain. 6 disulfides stabilise this stretch: cysteine 31–cysteine 165, cysteine 52–cysteine 68, cysteine 102–cysteine 258, cysteine 144–cysteine 212, cysteine 176–cysteine 191, and cysteine 202–cysteine 227. Catalysis depends on histidine 67, which acts as the Charge relay system. A glycan (N-linked (GlcNAc...) asparagine) is linked at asparagine 105. The active-site Charge relay system is the aspartate 112. 2 N-linked (GlcNAc...) asparagine glycosylation sites follow: asparagine 123 and asparagine 156. Serine 206 acts as the Charge relay system in catalysis.

The protein belongs to the peptidase S1 family. Snake venom subfamily. As to quaternary structure, monomer. Expressed by the venom gland.

It is found in the secreted. Snake venom serine protease that may act in the hemostasis system of the prey. The sequence is that of Snake venom serine protease salmobin from Gloydius halys (Chinese water mocassin).